The following is a 405-amino-acid chain: Acetate kinase (405 aa).

Mg(2+) is bound at residue Asn7. An ATP-binding site is contributed by Lys14. Arg98 provides a ligand contact to substrate. Catalysis depends on Asp155, which acts as the Proton donor/acceptor. ATP contacts are provided by residues 215-219, 289-291, and 337-341; these read HLGNG, DMR, and GIGEN. Glu391 lines the Mg(2+) pocket.

It belongs to the acetokinase family. Homodimer. Requires Mg(2+) as cofactor. Mn(2+) is required as a cofactor.

The protein resides in the cytoplasm. The catalysed reaction is acetate + ATP = acetyl phosphate + ADP. It participates in metabolic intermediate biosynthesis; acetyl-CoA biosynthesis; acetyl-CoA from acetate: step 1/2. In terms of biological role, catalyzes the formation of acetyl phosphate from acetate and ATP. Can also catalyze the reverse reaction. This chain is Acetate kinase, found in Desulfotalea psychrophila (strain LSv54 / DSM 12343).